A 1024-amino-acid polypeptide reads, in one-letter code: Beta-galactosidase (1024 aa).

The substrate site is built by Asn103 and Asp202. Asp202 contacts Na(+). Mg(2+) contacts are provided by Glu417, His419, and Glu462. Substrate is bound by residues Glu462 and 538-541; that span reads EYAH. Residue Glu462 is the Proton donor of the active site. Glu538 functions as the Nucleophile in the catalytic mechanism. Asn598 provides a ligand contact to Mg(2+). Positions 602 and 605 each coordinate Na(+). Substrate-binding residues include Asn605 and Trp1000.

It belongs to the glycosyl hydrolase 2 family. As to quaternary structure, homotetramer. Mg(2+) serves as cofactor. Requires Na(+) as cofactor.

It catalyses the reaction Hydrolysis of terminal non-reducing beta-D-galactose residues in beta-D-galactosides.. The polypeptide is Beta-galactosidase (Escherichia coli O17:K52:H18 (strain UMN026 / ExPEC)).